Here is a 123-residue protein sequence, read N- to C-terminus: GHRRPRRRVYSVRCDHCVEPEKARLARRLRIGSRVCGIPKNIISWSSFFDVLLSSRSCFVFFFLFSRWNFSSVRVLVMEACVFEHEFEKIKRPIFVSKKGQISIFLTYIMVNSESYGVLLSLK.

This is an uncharacterized protein from Human cytomegalovirus (strain AD169) (HHV-5).